Consider the following 216-residue polypeptide: Capsule polysaccharide export ATP-binding protein CtrD (216 aa).

Positions 2–215 (ISVEHVSKRY…DKAYEYYNSL (214 aa)) constitute an ABC transporter domain. 38-45 (GRNGAGKS) provides a ligand contact to ATP.

This sequence belongs to the ABC transporter superfamily.

Its subcellular location is the cell inner membrane. It catalyses the reaction ATP + H2O + capsular polysaccharide-[capsular polysaccharide-binding protein]Side 1 = ADP + phosphate + capsular polysaccharideSide 2 + [capsular polysaccharide-binding protein]Side 1.. In terms of biological role, putative ATP-binding protein, and an energy-coupling component of capsule polysaccharide export apparatus. This is Capsule polysaccharide export ATP-binding protein CtrD (ctrD) from Neisseria meningitidis serogroup B (strain ATCC BAA-335 / MC58).